A 600-amino-acid polypeptide reads, in one-letter code: Brain-enriched guanylate kinase-associated protein (600 aa).

Position 1 is an N-acetylmethionine (M1). The residue at position 137 (Y137) is a Phosphotyrosine. The interval 192–222 is disordered; sequence PGSLSSRMSDASARDLGYRDGVEKSGPRPPY. Phosphoserine is present on S200. Over residues 203 to 217 the composition is skewed to basic and acidic residues; sequence SARDLGYRDGVEKSG. Phosphoserine is present on residues S229 and S246. T249 bears the Phosphothreonine mark. S265 carries the phosphoserine modification. The segment at 298–317 is disordered; the sequence is SSYSSFSATSEEKEHAQAGT. S372 carries the post-translational modification Phosphoserine. R380 bears the Asymmetric dimethylarginine mark. Phosphoserine occurs at positions 463, 473, 483, 485, 508, 510, and 514. A disordered region spans residues 537–590; that stretch reads GAGSSPEPEHGSRESLEPSSMEASPEMHPPTRLSPQQAFPRTGGSGLSRKDSLT. The span at 543–552 shows a compositional bias: basic and acidic residues; it reads EPEHGSRESL. Phosphoserine is present on residues S560 and S570.

Interacts with DLG4 and DLGAP1 and forms a ternary complex.

The protein localises to the cytoplasm. Its subcellular location is the membrane. Functionally, may sustain the structure of the postsynaptic density (PSD). This chain is Brain-enriched guanylate kinase-associated protein (Begain), found in Mus musculus (Mouse).